The sequence spans 827 residues: Carnosine synthase 1 (827 aa).

Residues 516–720 (GPPWPSTSLH…LLLASTMVAC (205 aa)) form the ATP-grasp domain. ATP is bound at residue 542–611 (IYQVPLPGVM…MEFVEGTEHD (70 aa)). Positions 677, 689, and 691 each coordinate Mg(2+). Mn(2+)-binding residues include Glu677, Glu689, and Asn691.

Homotetramer. The cofactor is Mg(2+). It depends on Mn(2+) as a cofactor.

It carries out the reaction beta-alanine + L-histidine + ATP = carnosine + ADP + phosphate + H(+). It catalyses the reaction 4-aminobutanoate + L-histidine + ATP = L-homocarnosine + ADP + phosphate + H(+). Its function is as follows. Catalyzes the synthesis of carnosine and homocarnosine. Carnosine is synthesized more efficiently than homocarnosine. The sequence is that of Carnosine synthase 1 from Mus musculus (Mouse).